The primary structure comprises 255 residues: Ribosomal RNA small subunit methyltransferase A (255 aa).

S-adenosyl-L-methionine-binding residues include N13, L15, G40, E61, D85, and N103.

It belongs to the class I-like SAM-binding methyltransferase superfamily. rRNA adenine N(6)-methyltransferase family. RsmA subfamily.

The protein localises to the cytoplasm. The enzyme catalyses adenosine(1518)/adenosine(1519) in 16S rRNA + 4 S-adenosyl-L-methionine = N(6)-dimethyladenosine(1518)/N(6)-dimethyladenosine(1519) in 16S rRNA + 4 S-adenosyl-L-homocysteine + 4 H(+). In terms of biological role, specifically dimethylates two adjacent adenosines (A1518 and A1519) in the loop of a conserved hairpin near the 3'-end of 16S rRNA in the 30S particle. May play a critical role in biogenesis of 30S subunits. The protein is Ribosomal RNA small subunit methyltransferase A of Dechloromonas aromatica (strain RCB).